A 756-amino-acid polypeptide reads, in one-letter code: 5-methyltetrahydropteroyltriglutamate--homocysteine methyltransferase (756 aa).

Residues 16–19 (RELK) and Lys-112 contribute to the 5-methyltetrahydropteroyltri-L-glutamate site. Residues 432–434 (IGS) and Glu-485 each bind L-homocysteine. L-methionine-binding positions include 432 to 434 (IGS) and Glu-485. 5-methyltetrahydropteroyltri-L-glutamate is bound by residues 516 to 517 (RC) and Trp-562. An L-homocysteine-binding site is contributed by Asp-600. Asp-600 serves as a coordination point for L-methionine. Glu-606 is a binding site for 5-methyltetrahydropteroyltri-L-glutamate. Zn(2+)-binding residues include His-642, Cys-644, and Glu-666. Residue His-695 is the Proton donor of the active site. Position 727 (Cys-727) interacts with Zn(2+).

Belongs to the vitamin-B12 independent methionine synthase family. Zn(2+) serves as cofactor.

It carries out the reaction 5-methyltetrahydropteroyltri-L-glutamate + L-homocysteine = tetrahydropteroyltri-L-glutamate + L-methionine. It functions in the pathway amino-acid biosynthesis; L-methionine biosynthesis via de novo pathway; L-methionine from L-homocysteine (MetE route): step 1/1. In terms of biological role, catalyzes the transfer of a methyl group from 5-methyltetrahydrofolate to homocysteine resulting in methionine formation. In Haemophilus influenzae (strain PittGG), this protein is 5-methyltetrahydropteroyltriglutamate--homocysteine methyltransferase.